Here is a 184-residue protein sequence, read N- to C-terminus: Inosine triphosphate pyrophosphatase (184 aa).

Thr10–Lys15 is an ITP binding site. Position 38 (Glu38) interacts with Mg(2+). ITP is bound by residues Lys50, Asp66–Thr67, Lys83, Phe142–Asp145, Lys163, and His168–Arg169.

Belongs to the HAM1 NTPase family. As to quaternary structure, homodimer. Mg(2+) is required as a cofactor. Mn(2+) serves as cofactor.

It localises to the cytoplasm. The protein resides in the nucleus. It catalyses the reaction ITP + H2O = IMP + diphosphate + H(+). The catalysed reaction is dITP + H2O = dIMP + diphosphate + H(+). The enzyme catalyses XTP + H2O = XMP + diphosphate + H(+). In terms of biological role, pyrophosphatase that hydrolyzes non-canonical purine nucleotides such as inosine triphosphate (ITP), deoxyinosine triphosphate (dITP) or xanthosine 5'-triphosphate (XTP) to their respective monophosphate derivatives. The enzyme does not distinguish between the deoxy- and ribose forms. Probably excludes non-canonical purines from RNA and DNA precursor pools, thus preventing their incorporation into RNA and DNA and avoiding chromosomal lesions. This chain is Inosine triphosphate pyrophosphatase, found in Fusarium vanettenii (strain ATCC MYA-4622 / CBS 123669 / FGSC 9596 / NRRL 45880 / 77-13-4) (Fusarium solani subsp. pisi).